Reading from the N-terminus, the 604-residue chain is uncharacterized protein (604 aa).

An ABC transmembrane type-1 domain is found at 49-332 (LILVMLMVVI…LANQFNTMLS (284 aa)). A run of 4 helical transmembrane segments spans residues 50 to 70 (ILVM…PFVI), 86 to 106 (LIPV…SLWF), 172 to 192 (VITF…LTLI), and 288 to 308 (IAAI…SIVV). The 235-residue stretch at 366–600 (IEFRDVSFGY…KGFYSDLYES (235 aa)) folds into the ABC transporter domain. ATP is bound at residue 399–406 (GPTGAGKT). The chain crosses the membrane as a helical span at residues 510-530 (LISIARAVLADPVLLILDEAT).

The protein belongs to the ABC transporter superfamily.

It localises to the cell membrane. This is an uncharacterized protein from Bacillus subtilis (strain 168).